A 143-amino-acid chain; its full sequence is WW domain-containing protein C660.05 (143 aa).

The region spanning 9–44 (GLPAGWVAQWDPTYQAYFYINETFEGAQPQWEPPIP) is the WW domain. Residues 115 to 143 (HHGPLHGPHGGFGGRGGGRMGGRGGRGRR) form a disordered region.

The sequence is that of WW domain-containing protein C660.05 from Schizosaccharomyces pombe (strain 972 / ATCC 24843) (Fission yeast).